A 325-amino-acid polypeptide reads, in one-letter code: Tagatose 1,6-diphosphate aldolase 1 (325 aa).

This sequence belongs to the aldolase LacD family.

It catalyses the reaction D-tagatofuranose 1,6-bisphosphate = D-glyceraldehyde 3-phosphate + dihydroxyacetone phosphate. It functions in the pathway carbohydrate metabolism; D-tagatose 6-phosphate degradation; D-glyceraldehyde 3-phosphate and glycerone phosphate from D-tagatose 6-phosphate: step 2/2. The sequence is that of Tagatose 1,6-diphosphate aldolase 1 (lacD1) from Enterococcus faecalis (strain ATCC 700802 / V583).